Reading from the N-terminus, the 152-residue chain is Biogenesis of lysosome-related organelles complex 1 subunit 1 (152 aa).

Belongs to the BLOC1S1 family. As to quaternary structure, component of the biogenesis of lysosome-related organelles complex-1 (BLOC-1). Interacts with BLOS2 and SNX1. As to expression, expressed in the whole plant (at protein level).

It is found in the cytoplasm. The protein localises to the endosome. Component of the biogenesis of lysosome-related organelles complex-1 (BLOC-1), a complex that mediates the vacuolar degradative transport via the intracellular vesicle trafficking from the endosome to the vacuole. Probably regulates the PIN1 and PIN2 homeostasis through its interaction with SNX1. The sequence is that of Biogenesis of lysosome-related organelles complex 1 subunit 1 (BLOS1) from Arabidopsis thaliana (Mouse-ear cress).